The chain runs to 585 residues: Membrane protein insertase YidC (585 aa).

6 helical membrane passes run 5-25 (SVTG…FMSP), 338-358 (FGWD…AFTW), 362-382 (FVSN…LVTY), 432-452 (LGGC…FYVF), 482-502 (IPMY…TVFL), and 518-538 (IMLY…PSGL).

It belongs to the OXA1/ALB3/YidC family. Type 1 subfamily. As to quaternary structure, interacts with the Sec translocase complex via SecD. Specifically interacts with transmembrane segments of nascent integral membrane proteins during membrane integration.

It localises to the cell inner membrane. Its function is as follows. Required for the insertion and/or proper folding and/or complex formation of integral membrane proteins into the membrane. Involved in integration of membrane proteins that insert both dependently and independently of the Sec translocase complex, as well as at least some lipoproteins. Aids folding of multispanning membrane proteins. This is Membrane protein insertase YidC from Chlorobium luteolum (strain DSM 273 / BCRC 81028 / 2530) (Pelodictyon luteolum).